A 216-amino-acid chain; its full sequence is Guanylate kinase (216 aa).

One can recognise a Guanylate kinase-like domain in the interval 15-193 (GNLFMVVAPS…ALEELRNVVR (179 aa)). 22–29 (APSGAGKS) contacts ATP.

It belongs to the guanylate kinase family.

Its subcellular location is the cytoplasm. It carries out the reaction GMP + ATP = GDP + ADP. In terms of biological role, essential for recycling GMP and indirectly, cGMP. This Cupriavidus pinatubonensis (strain JMP 134 / LMG 1197) (Cupriavidus necator (strain JMP 134)) protein is Guanylate kinase.